We begin with the raw amino-acid sequence, 60 residues long: Large ribosomal subunit protein uL30 (60 aa).

This sequence belongs to the universal ribosomal protein uL30 family. In terms of assembly, part of the 50S ribosomal subunit.

The protein is Large ribosomal subunit protein uL30 of Albidiferax ferrireducens (strain ATCC BAA-621 / DSM 15236 / T118) (Rhodoferax ferrireducens).